Consider the following 311-residue polypeptide: tRNA dimethylallyltransferase (311 aa).

An ATP-binding site is contributed by 11–18 (GPTAVGKT). Residue 13–18 (TAVGKT) coordinates substrate. The interval 36 to 39 (DSMQ) is interaction with substrate tRNA.

The protein belongs to the IPP transferase family. Monomer. Mg(2+) serves as cofactor.

The enzyme catalyses adenosine(37) in tRNA + dimethylallyl diphosphate = N(6)-dimethylallyladenosine(37) in tRNA + diphosphate. Functionally, catalyzes the transfer of a dimethylallyl group onto the adenine at position 37 in tRNAs that read codons beginning with uridine, leading to the formation of N6-(dimethylallyl)adenosine (i(6)A). The protein is tRNA dimethylallyltransferase of Clostridioides difficile (strain 630) (Peptoclostridium difficile).